The primary structure comprises 1270 residues: Glycine betaine reductase ATRR (1270 aa).

The interval 14–418 (FTQQVRASPN…MIKLRGYSVV (405 aa)) is adenylation (A) domain. Residues 528–605 (KEDPIGIEDI…GHLDTVRAIR (78 aa)) enclose the Carrier domain. Serine 565 is modified (O-(pantetheine 4'-phosphoryl)serine). The segment at 643 to 937 (KTVLLTGVTG…EPLSWDDWVA (295 aa)) is carboxylic acid reductase domain R1. Positions 1026–1256 (PLSGKVAVVT…IYALRQPEHV (231 aa)) are aldehyde reductase domain R2.

The protein belongs to the NRP synthetase family.

With respect to regulation, the tetramethylammonium ion, which mimics the head group of glycine betaine, acts as a competitive inhibitor of ATRR A domain, whereas the potency decreased by three orders of magnitude with dimethylammonium. Choline is a mixed inhibitor for both glycine betaine reductase and aldehyde reductase activity but more potent in competition against glycine betaine in the first reduction step. Therefore, choline could act as a feedback inhibitor to regulate ATRR enzymatic activity. The lowered binding affinity of choline to R2 favors the release of choline after glycine betaine aldehyde reduction to avoid direct product inhibition. Functionally, NRPS-like enzyme with an unusual domain architecture that converts back glycine betaine to choline via a 2-step reduction mechanism, and thereby can be an alternative source of choline. Permits direct reutilization of endogenously stored glycine betaine for on-demand biosynthesis of choline and choline derivatives, including phospholipid phosphatidylcholine (PC) which has an essential role in maintaining membrane integrity and functionality, or choline-O-sulfate, a mean for intracellular sulfate storage. Glycine betaine is activated by the adenylation (A) domain, and transferred to the thiolation (T) domain. Movement of the phosphopantetheine arm to the thioester reductase domain R1 then allows thioester reduction by NADPH of glycine betainoyl thioester to glycine betaine aldehyde, which is in turn reduced to choline by the aldehyde reductase domain R2. This Emericella nidulans (strain FGSC A4 / ATCC 38163 / CBS 112.46 / NRRL 194 / M139) (Aspergillus nidulans) protein is Glycine betaine reductase ATRR.